A 77-amino-acid chain; its full sequence is uncharacterized protein (77 aa).

This is an uncharacterized protein from Salmonella typhimurium (strain LT2 / SGSC1412 / ATCC 700720).